Reading from the N-terminus, the 307-residue chain is Low-salt glycan biosynthesis hexosyltransferase Agl10 (307 aa).

This sequence belongs to the glycosyltransferase 2 family.

It participates in protein modification; protein glycosylation. The protein operates within cell surface structure biogenesis; S-layer biogenesis. In terms of biological role, hexosyltransferase involved in N-glycan biosynthetic pathway that takes place under low-salt conditions (1.75 M instead of 3.4 M). Participates in the formation of the tetrasaccharide present at 'Asn-532' of S-layer glycoprotein Csg, consisting of a sulfated hexose, 2 hexoses and rhamnose. Involved in the addition of final rhamnose (sugar 4) of the tetrasaccharide on the dolichol phosphate carrier. This chain is Low-salt glycan biosynthesis hexosyltransferase Agl10 (agl10), found in Haloferax volcanii (strain ATCC 29605 / DSM 3757 / JCM 8879 / NBRC 14742 / NCIMB 2012 / VKM B-1768 / DS2) (Halobacterium volcanii).